We begin with the raw amino-acid sequence, 435 residues long: Monodehydroascorbate reductase 2 (435 aa).

Residues 14–17 (GGVA), glutamate 41, arginine 48, lysine 53, isoleucine 96, and 147–148 (RE) contribute to the FAD site. NAD(+) contacts are provided by residues 172–178 (GGYIGLE), glutamate 196, arginine 202, and glycine 261. 174–178 (YIGLE) is an NADP(+) binding site. The NADP(+) site is built by arginine 202 and glycine 261. Residue aspartate 298 coordinates FAD. 314–315 (EH) is an NAD(+) binding site. 314-315 (EH) is a binding site for NADP(+). Residue valine 316 coordinates FAD. Arginine 320 is a binding site for L-ascorbate. Tyrosine 349 serves as a coordination point for FAD. Tyrosine 349 contributes to the NAD(+) binding site. Tyrosine 349 serves as a coordination point for NADP(+). Arginine 351 serves as a coordination point for L-ascorbate. Serine 417 is subject to Phosphoserine.

It belongs to the FAD-dependent oxidoreductase family. FAD serves as cofactor.

It localises to the cytoplasm. The catalysed reaction is 2 monodehydro-L-ascorbate radical + NADH + H(+) = 2 L-ascorbate + NAD(+). Its function is as follows. Catalyzes the conversion of monodehydroascorbate to ascorbate, oxidizing NADH in the process. The chain is Monodehydroascorbate reductase 2 from Arabidopsis thaliana (Mouse-ear cress).